Reading from the N-terminus, the 622-residue chain is Chaperone protein DnaK (622 aa).

A Phosphothreonine; by autocatalysis modification is found at threonine 197. Composition is skewed to basic and acidic residues over residues 515–528 (LHKE…EAVE) and 575–614 (ASKE…KKDD). Disordered stretches follow at residues 515–537 (LHKE…DSLV) and 575–622 (ASKE…AEVE).

The protein belongs to the heat shock protein 70 family.

In terms of biological role, acts as a chaperone. The sequence is that of Chaperone protein DnaK from Campylobacter lari (strain RM2100 / D67 / ATCC BAA-1060).